The following is a 528-amino-acid chain: Phosphoenolpyruvate carboxykinase (ATP) (528 aa).

Arg-56, Tyr-192, and Lys-198 together coordinate substrate. Residues Lys-198, His-217, and 233–241 each bind ATP; that span reads GLSGTGKTT. 2 residues coordinate Mn(2+): Lys-198 and His-217. Asp-254 is a Mn(2+) binding site. Positions 282, 319, and 444 each coordinate ATP. Arg-319 is a binding site for substrate.

It belongs to the phosphoenolpyruvate carboxykinase (ATP) family. It depends on Mn(2+) as a cofactor.

It is found in the cytoplasm. It carries out the reaction oxaloacetate + ATP = phosphoenolpyruvate + ADP + CO2. The protein operates within carbohydrate biosynthesis; gluconeogenesis. Involved in the gluconeogenesis. Catalyzes the conversion of oxaloacetate (OAA) to phosphoenolpyruvate (PEP) through direct phosphoryl transfer between the nucleoside triphosphate and OAA. The sequence is that of Phosphoenolpyruvate carboxykinase (ATP) from Lysinibacillus sphaericus (strain C3-41).